The chain runs to 253 residues: Uracil-DNA glycosylase (253 aa).

The Proton acceptor role is filled by Asp79.

It belongs to the uracil-DNA glycosylase (UDG) superfamily. UNG family.

It is found in the cytoplasm. The enzyme catalyses Hydrolyzes single-stranded DNA or mismatched double-stranded DNA and polynucleotides, releasing free uracil.. Functionally, excises uracil residues from the DNA which can arise as a result of misincorporation of dUMP residues by DNA polymerase or due to deamination of cytosine. The protein is Uracil-DNA glycosylase of Xylella fastidiosa (strain 9a5c).